The following is a 1015-amino-acid chain: Putative ankyrin repeat protein R96 (1015 aa).

Positions 1-14 (MSTVKKSSKKKSSK) are enriched in basic residues. Residues 1 to 37 (MSTVKKSSKKKSSKKSSSGNESSKKSSPKIVPKHTAK) form a disordered region. ANK repeat units lie at residues 136–165 (NGHK…NIDF), 168–201 (APSN…AVNI), 202–231 (DGRS…DVEV), 340–370 (LGHN…DFQA), 374–403 (NITN…KIVS), 456–485 (SGYR…TIFA), 498–527 (NNND…QFQL), and 535–564 (TVPT…ITDC).

This chain is Putative ankyrin repeat protein R96, found in Acanthamoeba polyphaga mimivirus (APMV).